Here is a 699-residue protein sequence, read N- to C-terminus: Glycine--tRNA ligase beta subunit (699 aa).

The protein belongs to the class-II aminoacyl-tRNA synthetase family. In terms of assembly, tetramer of two alpha and two beta subunits.

It is found in the cytoplasm. It carries out the reaction tRNA(Gly) + glycine + ATP = glycyl-tRNA(Gly) + AMP + diphosphate. This chain is Glycine--tRNA ligase beta subunit, found in Bradyrhizobium diazoefficiens (strain JCM 10833 / BCRC 13528 / IAM 13628 / NBRC 14792 / USDA 110).